Consider the following 210-residue polypeptide: Ribosomal RNA small subunit methyltransferase G (210 aa).

S-adenosyl-L-methionine is bound by residues Gly-76, Leu-81, 127–128, and Arg-142; that span reads VE.

This sequence belongs to the methyltransferase superfamily. RNA methyltransferase RsmG family.

The protein localises to the cytoplasm. The enzyme catalyses guanosine(527) in 16S rRNA + S-adenosyl-L-methionine = N(7)-methylguanosine(527) in 16S rRNA + S-adenosyl-L-homocysteine. Functionally, specifically methylates the N7 position of guanine in position 527 of 16S rRNA. The sequence is that of Ribosomal RNA small subunit methyltransferase G from Vibrio cholerae serotype O1 (strain ATCC 39315 / El Tor Inaba N16961).